We begin with the raw amino-acid sequence, 178 residues long: Fatty-acid and retinol-binding protein 1 (178 aa).

The N-terminal stretch at 1–16 (MYHRLILLALVGTTMA) is a signal peptide. 2 coiled-coil regions span residues 67–89 (DAAL…ELRN) and 130–153 (KQAA…ELKV).

Belongs to the fatty-acid and retinol-binding protein (FARBP) family. In terms of processing, not glycosylated.

The protein resides in the secreted. In terms of biological role, binds retinol. Also binds the fluorescent fatty acid 11-((5-dimethylaminonaphthalene-1-sulfonyl)amino)undecanoic acid (DAUDA). The long chain fatty acid oleic acid can act competitively to displace bound DAUDA and retinol. The protein is Fatty-acid and retinol-binding protein 1 of Brugia malayi (Filarial nematode worm).